The following is a 274-amino-acid chain: Penicillin-insensitive murein endopeptidase (274 aa).

Residues 1-19 (MKKTAIALLAWFVSSASLA) form the signal peptide. Disulfide bonds link Cys44/Cys265, Cys187/Cys235, and Cys216/Cys223. Residues His110, His113, Asp120, Asp147, and His150 each coordinate Zn(2+). The interval 225 to 274 (DQPLPPPGDGCGAELQSWFEPPKPGTTKPEKKTPPPLPPSCQALLDEHVL) is disordered.

This sequence belongs to the peptidase M74 family. Dimer. The cofactor is Zn(2+).

Its subcellular location is the periplasm. In terms of biological role, murein endopeptidase that cleaves the D-alanyl-meso-2,6-diamino-pimelyl amide bond that connects peptidoglycan strands. Likely plays a role in the removal of murein from the sacculus. The protein is Penicillin-insensitive murein endopeptidase of Salmonella paratyphi A (strain ATCC 9150 / SARB42).